The primary structure comprises 205 residues: Outer-membrane lipoprotein LolB (205 aa).

A signal peptide spans 1–17; that stretch reads MRLRLFLAASALALLSG. Cysteine 18 is lipidated: N-palmitoyl cysteine. A lipid anchor (S-diacylglycerol cysteine) is attached at cysteine 18.

The protein belongs to the LolB family. In terms of assembly, monomer.

It localises to the cell outer membrane. Functionally, plays a critical role in the incorporation of lipoproteins in the outer membrane after they are released by the LolA protein. This chain is Outer-membrane lipoprotein LolB, found in Pseudomonas aeruginosa (strain LESB58).